Here is a 67-residue protein sequence, read N- to C-terminus: Probable Sec-independent protein translocase protein TatE (67 aa).

Residues 1-21 (MEGISIAKLLIIGALIVLLFG) traverse the membrane as a helical segment. Residues 44–67 (KDEDTSAARTTAEETPAERVSHKD) are disordered.

Belongs to the TatA/E family. TatE subfamily.

Its subcellular location is the cell inner membrane. Part of the twin-arginine translocation (Tat) system that transports large folded proteins containing a characteristic twin-arginine motif in their signal peptide across membranes. TatE shares overlapping functions with TatA. The protein is Probable Sec-independent protein translocase protein TatE of Pantoea ananatis (strain LMG 20103).